A 610-amino-acid chain; its full sequence is Glutamine--fructose-6-phosphate aminotransferase [isomerizing] (610 aa).

Cys2 acts as the Nucleophile; for GATase activity in catalysis. The Glutamine amidotransferase type-2 domain maps to 2–217; sequence CGIVGYVGQK…DKEFVVLTND (216 aa). 2 SIS domains span residues 284–424 and 453–600; these read ITKE…LKGS and LIKE…VDKP. Lys605 functions as the For Fru-6P isomerization activity in the catalytic mechanism.

In terms of assembly, homodimer.

The protein localises to the cytoplasm. It catalyses the reaction D-fructose 6-phosphate + L-glutamine = D-glucosamine 6-phosphate + L-glutamate. In terms of biological role, catalyzes the first step in hexosamine metabolism, converting fructose-6P into glucosamine-6P using glutamine as a nitrogen source. The protein is Glutamine--fructose-6-phosphate aminotransferase [isomerizing] of Clostridium perfringens (strain 13 / Type A).